Here is a 257-residue protein sequence, read N- to C-terminus: tRNA pseudouridine synthase A (257 aa).

Aspartate 53 (nucleophile) is an active-site residue. Tyrosine 111 serves as a coordination point for substrate.

This sequence belongs to the tRNA pseudouridine synthase TruA family. As to quaternary structure, homodimer.

It carries out the reaction uridine(38/39/40) in tRNA = pseudouridine(38/39/40) in tRNA. Its function is as follows. Formation of pseudouridine at positions 38, 39 and 40 in the anticodon stem and loop of transfer RNAs. The chain is tRNA pseudouridine synthase A from Xanthomonas euvesicatoria pv. vesicatoria (strain 85-10) (Xanthomonas campestris pv. vesicatoria).